The chain runs to 258 residues: L-aminoadipate-semialdehyde dehydrogenase-phosphopantetheinyl transferase (258 aa).

It belongs to the P-Pant transferase superfamily. AcpS family.

It is found in the cytoplasm. It localises to the nucleus. The enzyme catalyses apo-[ACP] + CoA = holo-[ACP] + adenosine 3',5'-bisphosphate + H(+). Catalyzes the transfer of a 4'-phosphopantetheine moiety from coenzyme A to a serine residue of acceptor proteins, such as alpha-aminoadipate reductase. Necessary for alpha-aminoadipate reductase activity. This chain is L-aminoadipate-semialdehyde dehydrogenase-phosphopantetheinyl transferase (lys7), found in Schizosaccharomyces pombe (strain 972 / ATCC 24843) (Fission yeast).